A 1385-amino-acid polypeptide reads, in one-letter code: Probable serine/threonine-protein kinase DDB_G0268876 (1385 aa).

The 251-residue stretch at 758–1008 folds into the Protein kinase domain; sequence LELTKEIGRG…QQIITYLENL (251 aa). Residues 764–772 and Lys785 contribute to the ATP site; that span reads IGRGVSGVV. The active-site Proton acceptor is the Asp878. 3 disordered regions span residues 1040-1074, 1091-1266, and 1287-1339; these read GGNS…ENKI, EVSK…SVGG, and ISSS…NNNN. The span at 1055-1073 shows a compositional bias: polar residues; sequence VSGSNNNESSTAVSLNENK. Low complexity predominate over residues 1107-1144; it reads SSSTSSSPSTLSAPQSPVGSTSPMGSTSTSPISNNNNR. Residues 1145–1162 show a composition bias toward basic and acidic residues; the sequence is PTHDHQQPHQVKWERIVP. Low complexity-rich tracts occupy residues 1189 to 1232, 1242 to 1266, and 1295 to 1339; these read NNNN…SSGI, FLSS…SVGG, and NNNN…NNNN.

This sequence belongs to the protein kinase superfamily. TKL Ser/Thr protein kinase family.

The catalysed reaction is L-seryl-[protein] + ATP = O-phospho-L-seryl-[protein] + ADP + H(+). The enzyme catalyses L-threonyl-[protein] + ATP = O-phospho-L-threonyl-[protein] + ADP + H(+). The sequence is that of Probable serine/threonine-protein kinase DDB_G0268876 from Dictyostelium discoideum (Social amoeba).